Here is a 303-residue protein sequence, read N- to C-terminus: sn-1-specific diacylglycerol lipase ABHD11 (303 aa).

The transit peptide at 1-22 (MLRWTRAWTAPYRGIGLSNSSF) directs the protein to the mitochondrion. One can recognise an AB hydrolase-1 domain in the interval 55–290 (PALVFLHGLF…NAGHWVHSDR (236 aa)). An N6-succinyllysine modification is found at Lys-75. Catalysis depends on charge relay system residues Ser-129, Asp-225, and His-284.

Belongs to the AB hydrolase superfamily. In terms of assembly, interacts with OGDH and DLST; this interaction maintains the functional lipoylation of the 2-oxoglutarate dehydrogenase complex. Phosphorylated.

It localises to the mitochondrion. It is found in the mitochondrion matrix. The enzyme catalyses a 1,3-diacyl-sn-glycerol + H2O = a 1-acyl-sn-glycerol + a fatty acid + H(+). The catalysed reaction is 1-octadecanoyl-2-(9Z-octadecenoyl)-sn-glycerol + H2O = 2-(9Z-octadecenoyl)-glycerol + octadecanoate + H(+). It carries out the reaction 1-octadecanoyl-2-(4Z,7Z,10Z,13Z,16Z,19Z-docosahexaenoyl)-sn-glycerol + H2O = 2-(4Z,7Z,10Z,13Z,16Z,19Z-docosahexaenoyl)-glycerol + octadecanoate + H(+). It catalyses the reaction a 1,2-diacyl-sn-glycerol + H2O = a 2-acylglycerol + a fatty acid + H(+). The enzyme catalyses 1,2-didecanoylglycerol + H2O = decanoylglycerol + decanoate + H(+). The catalysed reaction is 1-octadecanoyl-2-(5Z,8Z,11Z,14Z-eicosatetraenoyl)-sn-glycerol + H2O = 2-(5Z,8Z,11Z,14Z-eicosatetraenoyl)-glycerol + octadecanoate + H(+). Its activity is regulated as follows. The diacylglycerol lipase activity can be modulated by phosphorylation by cAMP-dependent protein kinase. In terms of biological role, catalyzes the hydrolysis of diacylglycerol in vitro and may function as a key regulator in lipid metabolism, namely by regulating the intracellular levels of diacylglycerol. 1,2-diacyl-sn-glycerols are the preferred substrate over 1,3-diacyl-sn-glycerols. The enzyme hydrolyzes stearate in preference to palmitate from the sn-1 position of 1,2-diacyl-sn-glycerols. Maintains the functional lipoylation of the 2-oxoglutarate dehydrogenase complex (OGDHc) through its interaction with the OGDHc by preventing the formation of lipoyl adducts. In addition, is also required for the expansion and differentiation of embryonic stem cells (ESCs). The sequence is that of sn-1-specific diacylglycerol lipase ABHD11 from Bos taurus (Bovine).